We begin with the raw amino-acid sequence, 186 residues long: Spermidine N(1)-acetyltransferase (186 aa).

The N-acetyltransferase domain occupies 7–167 (VKLRPLERED…NAIRMCIFQH (161 aa)). Spermine is bound by residues M30, E35, E43, and 51 to 54 (HIHD). E35 contacts Mg(2+). Residues E35 and E43 each contribute to the spermidine site. E76 contributes to the Mg(2+) binding site. 85–87 (EFQ) is a spermine binding site. Residues 88 to 90 (III), 95 to 101 (QGKGLAT), and 128 to 137 (NEKAIHIYRK) contribute to the acetyl-CoA site. The active-site Proton donor is the Y135.

The protein belongs to the acetyltransferase family. Homododecamer.

It is found in the cytoplasm. The enzyme catalyses an alkane-alpha,omega-diamine + acetyl-CoA = an N-acetylalkane-alpha,omega-diamine + CoA + H(+). It carries out the reaction spermidine + acetyl-CoA = N(1)-acetylspermidine + CoA + H(+). The catalysed reaction is spermidine + acetyl-CoA = N(8)-acetylspermidine + CoA + H(+). It catalyses the reaction spermine + acetyl-CoA = N(1)-acetylspermine + CoA + H(+). It participates in amine and polyamine degradation; spermidine degradation. The protein operates within amine and polyamine degradation; spermine degradation. Its function is as follows. Involved in the protection against polyamine toxicity by regulating their concentration. Catalyzes the transfer of an acetyl group from acetyl coenzyme A (AcCoA) to the primary amino groups of spermidine to yield N(1)- and N(8)-acetylspermidine. It can also use spermine. The sequence is that of Spermidine N(1)-acetyltransferase (speG) from Escherichia coli O157:H7.